The chain runs to 83 residues: Mitochondrial import inner membrane translocase subunit Tim8 (83 aa).

Residues 35–60 (CWDVCFADYRPPSKMDGKTQTCIQNC) carry the Twin CX3C motif motif. 2 cysteine pairs are disulfide-bonded: Cys-35/Cys-60 and Cys-39/Cys-56.

This sequence belongs to the small Tim family. As to quaternary structure, heterohexamer; composed of 3 copies of ddp-1/tim-8 and 3 copies of tin-13/tim-13, named soluble 70 kDa complex. Associates with the TIM22 complex, whose core is composed of tim-22.

The protein resides in the mitochondrion inner membrane. Functionally, mitochondrial intermembrane chaperone that participates in the import and insertion of some multi-pass transmembrane proteins into the mitochondrial inner membrane. Also required for the transfer of beta-barrel precursors from the TOM complex to the sorting and assembly machinery (SAM complex) of the outer membrane. Acts as a chaperone-like protein that protects the hydrophobic precursors from aggregation and guide them through the mitochondrial intermembrane space. The ddp-1/tim-8-tim-13 complex mediates the import of some proteins while the predominant tim-9/tin-9.1-tim-10/tin-10 70 kDa complex mediates the import of much more proteins. In Caenorhabditis elegans, this protein is Mitochondrial import inner membrane translocase subunit Tim8.